Consider the following 92-residue polypeptide: Large ribosomal subunit protein bL25 (92 aa).

This sequence belongs to the bacterial ribosomal protein bL25 family. As to quaternary structure, part of the 50S ribosomal subunit; part of the 5S rRNA/L5/L18/L25 subcomplex. Contacts the 5S rRNA. Binds to the 5S rRNA independently of L5 and L18.

This is one of the proteins that binds to the 5S RNA in the ribosome where it forms part of the central protuberance. This chain is Large ribosomal subunit protein bL25, found in Vibrio atlanticus (strain LGP32) (Vibrio splendidus (strain Mel32)).